The chain runs to 156 residues: MPRRRVIGQRKILPDPKFGSELLAKFVNILMVDGKKSTAETIVYSALETLAQRSGKTELEAFEVALENVRPTVEVKSRRVGGSTYQVPVEVRPVRRNALAMRWIVEAARKRGDKSMALRLANELTDAADNKGTAVKKREDVHRMAEANKAFAHYRW.

This sequence belongs to the universal ribosomal protein uS7 family. Part of the 30S ribosomal subunit. Contacts proteins S9 and S11.

In terms of biological role, one of the primary rRNA binding proteins, it binds directly to 16S rRNA where it nucleates assembly of the head domain of the 30S subunit. Is located at the subunit interface close to the decoding center, probably blocks exit of the E-site tRNA. The protein is Small ribosomal subunit protein uS7 of Klebsiella pneumoniae subsp. pneumoniae (strain ATCC 700721 / MGH 78578).